Consider the following 417-residue polypeptide: Gamma-glutamyl phosphate reductase (417 aa).

The protein belongs to the gamma-glutamyl phosphate reductase family.

It is found in the cytoplasm. It carries out the reaction L-glutamate 5-semialdehyde + phosphate + NADP(+) = L-glutamyl 5-phosphate + NADPH + H(+). It participates in amino-acid biosynthesis; L-proline biosynthesis; L-glutamate 5-semialdehyde from L-glutamate: step 2/2. Its function is as follows. Catalyzes the NADPH-dependent reduction of L-glutamate 5-phosphate into L-glutamate 5-semialdehyde and phosphate. The product spontaneously undergoes cyclization to form 1-pyrroline-5-carboxylate. This Escherichia coli O127:H6 (strain E2348/69 / EPEC) protein is Gamma-glutamyl phosphate reductase.